A 233-amino-acid chain; its full sequence is Lysine exporter LysE (233 aa).

Over 1–2 (ME) the chain is Cytoplasmic. Residues 3 to 23 (IFITGLLLGASLLLSIGPQNV) traverse the membrane as a helical segment. The Periplasmic segment spans residues 24 to 65 (LVIKQGIKREGLIAVLLVCLISDVFLFIAGTLGVDLLSNAAP). A helical membrane pass occupies residues 66 to 86 (IVLDIMRWGGIAYLLWFAVMA). Residues 87-143 (AKDAMTNKVEAPQIIEETEPTVPDDTPLGGSAVATDTRNRVRVEVSVDKQRVWVKPM) are Cytoplasmic-facing. A helical transmembrane segment spans residues 144-164 (LMAIVLTWLNPNAYLDAFVFI). Residues 165-176 (GGVGAQYGDTGR) lie on the Periplasmic side of the membrane. The helical transmembrane segment at 177 to 197 (WIFAAGAFAASLIWFPLVGFG) threads the bilayer. Over 198-212 (AAALSRPLSSPKVWR) the chain is Cytoplasmic. The chain crosses the membrane as a helical span at residues 213–233 (WINVVVAVVMTALAIKLMLMG).

The protein belongs to the LysE/ArgO transporter (TC 2.A.75) family.

It is found in the cell inner membrane. Transport process is modulated by three forces: the membrane potential, the chemical potential of lysine, and the proton gradient. Strongly inhibited by CCCP and valinomycin. In terms of biological role, catalyzes the efflux of L-lysine. Can also export L-arginine and L-citrulline. The lysEG system prevents bacteriostasis due to elevated L-lysine or L-arginine concentrations that arise during growth in the presence of peptides or in mutants possessing a deregulated biosynthesis pathway. In vitro, can also export D-lysine during biotechnological production of D-amino acids. The sequence is that of Lysine exporter LysE from Corynebacterium glutamicum (strain ATCC 13032 / DSM 20300 / JCM 1318 / BCRC 11384 / CCUG 27702 / LMG 3730 / NBRC 12168 / NCIMB 10025 / NRRL B-2784 / 534).